A 427-amino-acid polypeptide reads, in one-letter code: Serine--tRNA ligase (427 aa).

An L-serine-binding site is contributed by 230-232 (TAE). 261–263 (RAE) contacts ATP. Glutamate 284 contributes to the L-serine binding site. Residue 348–351 (EISS) participates in ATP binding. Serine 384 provides a ligand contact to L-serine.

Belongs to the class-II aminoacyl-tRNA synthetase family. Type-1 seryl-tRNA synthetase subfamily. Homodimer. The tRNA molecule binds across the dimer.

The protein localises to the cytoplasm. It catalyses the reaction tRNA(Ser) + L-serine + ATP = L-seryl-tRNA(Ser) + AMP + diphosphate + H(+). The enzyme catalyses tRNA(Sec) + L-serine + ATP = L-seryl-tRNA(Sec) + AMP + diphosphate + H(+). It participates in aminoacyl-tRNA biosynthesis; selenocysteinyl-tRNA(Sec) biosynthesis; L-seryl-tRNA(Sec) from L-serine and tRNA(Sec): step 1/1. Catalyzes the attachment of serine to tRNA(Ser). Is also able to aminoacylate tRNA(Sec) with serine, to form the misacylated tRNA L-seryl-tRNA(Sec), which will be further converted into selenocysteinyl-tRNA(Sec). This chain is Serine--tRNA ligase, found in Moorella thermoacetica (strain ATCC 39073 / JCM 9320).